A 148-amino-acid polypeptide reads, in one-letter code: Large ribosomal subunit protein uL13 (148 aa).

This sequence belongs to the universal ribosomal protein uL13 family. As to quaternary structure, part of the 50S ribosomal subunit.

Its function is as follows. This protein is one of the early assembly proteins of the 50S ribosomal subunit, although it is not seen to bind rRNA by itself. It is important during the early stages of 50S assembly. This Lacticaseibacillus casei (strain BL23) (Lactobacillus casei) protein is Large ribosomal subunit protein uL13.